The primary structure comprises 428 residues: MVDSLTLQPVALVNGTVNLPGSKSVSNRALLLAALAEGTTTLTNLLDSDDVRHMLNALQALGVSYQLSDDRTTCKVDGVGGPLVASKPLELFLGNAGTAMRPLAAALCLGSNDVVLTGEPRMKERPIGHLVDALRQGGAQIDYLEQTDYPPLRLRGGFRGGDVTVDGSVSSQFLTALLMTAPLAEQDTHIHIKGELVSKPYIDITLHLMRTFGVEVSHDNYRVFHINGRQTYRSPGDYLVEGDASSASYFLAAAAIKGGTVRVTGIGKKSVQGDTKFADVLEKMGARITWGDDYIECSRGELRGIDMDMNHIPDAAMTIATAALFAEGPTTIRNIYNWRVKETDRLAAMATELRKVGAEVDEGEDYIHVVPPAKLKFADIGTYNDHRMAMCFSLVALSDTPVTILDPKCTAKTFPDYFEQLARISQLA.

Residues K23, S24, and R28 each contribute to the 3-phosphoshikimate site. K23 is a phosphoenolpyruvate binding site. Phosphoenolpyruvate contacts are provided by G97 and R125. S170, S171, Q172, S198, D314, N337, and K341 together coordinate 3-phosphoshikimate. Residue Q172 coordinates phosphoenolpyruvate. D314 (proton acceptor) is an active-site residue. Phosphoenolpyruvate-binding residues include R345, R387, and K412.

This sequence belongs to the EPSP synthase family. As to quaternary structure, monomer.

It is found in the cytoplasm. The catalysed reaction is 3-phosphoshikimate + phosphoenolpyruvate = 5-O-(1-carboxyvinyl)-3-phosphoshikimate + phosphate. Its pathway is metabolic intermediate biosynthesis; chorismate biosynthesis; chorismate from D-erythrose 4-phosphate and phosphoenolpyruvate: step 6/7. In terms of biological role, catalyzes the transfer of the enolpyruvyl moiety of phosphoenolpyruvate (PEP) to the 5-hydroxyl of shikimate-3-phosphate (S3P) to produce enolpyruvyl shikimate-3-phosphate and inorganic phosphate. This Serratia proteamaculans (strain 568) protein is 3-phosphoshikimate 1-carboxyvinyltransferase.